A 334-amino-acid polypeptide reads, in one-letter code: NmrA-like family domain-containing oxidoreductase lnaB (334 aa).

NADP(+) contacts are provided by residues 12-17 (GGTGKQ), 38-42 (RNAQS), 59-60 (DG), 80-82 (INS), K138, and 162-165 (FLEN).

This sequence belongs to the NmrA-type oxidoreductase family.

Its pathway is secondary metabolite biosynthesis. In terms of biological role, nmrA-like family domain-containing oxidoreductase; part of the lna gene cluster that mediates the biosynthesis of diastereomeric piperazines. Lna and lnb clusters encode sets of enzymes that produce overlapping sets of previously undescribed metabolites such as piperazinomycin-like metabolites or morpholine. The lna and lnb biosynthetic pathways appear to be part of a signaling network that controls the formation of sclerotia, a resilient overwintering structure. One primary function of the non-canonical nonribosomal peptide synthetases lnaA and lnbA consists in the reduction of L-tyrosine. The presence in the clusters of tailoring enzymes such as the oxidoreductases lnaB, lnbB, lnaE or lnbE, as well as of the cytochrome P450 monooxygenases lnaC, lnaD, or lnbC, might explain formation of various diastereomeric piperazines. This chain is NmrA-like family domain-containing oxidoreductase lnaB, found in Aspergillus flavus (strain ATCC 200026 / FGSC A1120 / IAM 13836 / NRRL 3357 / JCM 12722 / SRRC 167).